The primary structure comprises 2753 residues: MARKKLKKFTTLEIVLSVLLLVLFIISIVLIVLLAKESLKSTAPDPGTTGTPDPGTTGTPDPGTTGTTHARTTGPPDPGTTGTTPVSAECPVVNELERINCIPDQPPTKATCDQRGCCWNPQGAVSVPWCYYSKNHSYHVEGNLVNTNAGFTARLKNLPSSPVFGSNVDNVLLTAEYQTSNRFHFKLTDQTNNRFEVPHEHVQSFSGNAAASLTYQVEISRQPFSIKVTRRSNNRVLFDSSIGPLLFADQFLQLSTRLPSTNVYGLGEHVHQQYRHDMNWKTWPIFNRDTTPNGNGTNLYGAQTFFLCLEDASGLSFGVFLMNSNAMEVVLQPAPAITYRTIGGILDFYVFLGNTPEQVVQEYLELIGRPALPSYWALGFHLSRYEYGTLDNMREVVERNRAAQLPYDVQHADIDYMDERRDFTYDSVDFKGFPEFVNELHNNGQKLVIIVDPAISNNSSSSKPYGPYDRGSDMKIWVNSSDGVTPLIGEVWPGQTVFPDYTNPNCAVWWTKEFELFHNQVEFDGIWIDMNEVSNFVDGSVSGCSTNNLNNPPFTPRILDGYLFCKTLCMDAVQHWGKQYDIHNLYGYSMAVATAEAAKTVFPNKRSFILTRSTFAGSGKFAAHWLGDNTATWDDLRWSIPGVLEFNLFGIPMVGPDICGFALDTPEELCRRWMQLGAFYPFSRNHNGQGYKDQDPASFGADSLLLNSSRHYLNIRYTLLPYLYTLFFRAHSRGDTVARPLLHEFYEDNSTWDVHQQFLWGPGLLITPVLDEGAEKVMAYVPDAVWYDYETGSQVRWRKQKVEMELPGDKIGLHLRGGYIFPTQQPNTTTLASRKNPLGLIIALDENKEAKGELFWDNGETKDTVANKVYLLCEFSVTQNRLEVNISQSTYKDPNNLAFNEIKILGTEEPSNVTVKHNGVPSQTSPTVTYDSNLKVAIITDIDLLLGEAYTVEWSIKIRDEEKIDCYPDENGASAENCTARGCIWEASNSSGVPFCYFVNDLYSVSDVQYNSHGATADISLKSSVYANAFPSTPVNPLRLDVTYHKNEMLQFKIYDPNKNRYEVPVPLNIPSMPSSTPEGQLYDVLIKKNPFGIEIRRKSTGTIIWDSQLLGFTFSDMFIRISTRLPSKYLYGFGETEHRSYRRDLEWHTWGMFSRDQPPGYKKNSYGVHPYYMGLEEDGSAHGVLLLNSNAMDVTFQPLPALTYRTTGGVLDFYVFLGPTPELVTQQYTELIGRPVMVPYWSLGFQLCRYGYQNDSEIASLYDEMVAAQIPYDVQYSDIDYMERQLDFTLSPKFAGFPALINRMKADGMRVILILDPAISGNETQPYPAFTRGVEDDVFIKYPNDGDIVWGKVWPDFPDVVVNGSLDWDSQVELYRAYVAFPDFFRNSTAKWWKREIEELYNNPQNPERSLKFDGMWIDMNEPSSFVNGAVSPGCRDASLNHPPYMPHLESRDRGLSSKTLCMESQQILPDGSLVQHYNVHNLYGWSQTRPTYEAVQEVTGQRGVVITRSTFPSSGRWAGHWLGDNTAAWDQLKKSIIGMMEFSLFGISYTGADICGFFQDAEYEMCVRWMQLGAFYPFSRNHNTIGTRRQDPVSWDAAFVNISRNVLQTRYTLLPYLYTLMQKAHTEGVTVVRPLLHEFVSDQVTWDIDSQFLLGPAFLVSPVLERNARNVTAYFPRARWYDYYTGVDINARGEWKTLPAPLDHINLHVRGGYILPWQEPALNTHLSRKNPLGLIIALDENKEAKGELFWDDGQTKDTVAKKVYLLCEFSVTQNHLEVTISQSTYKDPNNLAFNEIKILGMEEPSNVTVKHNGVPSQTSPTVTYDSNLKVAIITDINLFLGEAYTVEWSIKIRDEEKIDCYPDENGDSAENCTARGCIWEASNSSGVPFCYFVNDLYSVSDVQYNSHGATADISLKSSVHANAFPSTPVNPLRLDVTYHKNEMLQFKIYDPNNNRYEVPVPLNIPSVPSSTPEGQLYDVLIKKNPFGIEIRRKSTGTIIWDSQLLGFTFNDMFIRISTRLPSKYLYGFGETEHTSYRRDLEWHTWGMFSRDQPPGYKKNSYGVHPYYMGLEEDGSAHGVLLLNSNAMDVTFQPLPALTYRTTGGVLDFYVFLGPTPELVTQQYTELIGRPVMVPYWSLGFQLCRYGYQNDSEISSLYDEMVAAQIPYDVQYSDIDYMERQLDFTLSPKFAGFPALINRMKADGMRVILILDPAISGNETQPYPAFTRGVEDDVFIKYPNDGDIVWGKVWPDFPDVVVNGSLDWDSQVELYRAYVAFPDFFRNSTAKWWKREIEELYNNPQNPERSLKFDGMWIDMNEPSSFVNGAVSPGCRDASLNHPPYMPYLESRDRGLSSKTLCMESQQILPDGSPVQHYNVHNLYGWSQTRPTYEAVQEVTGQRGVVITRSTFPSSGRWAGHWLGDNTAAWDQLKKSIIGMMEFSLFGISYTGADICGFFQDAEYEMCVRWMQLGAFYPFSRNHNTIGTRRQDPVSWDVAFVNISRTVLQTRYTLLPYLYTLMHKAHTEGVTVVRPLLHEFVSDQVTWDIDSQFLLGPAFLVSPVLERNARNVTAYFPRARWYDYYTGVDINARGEWKTLPAPLDHINLHVRGGYILPWQEPALNTHLSRQKFMGFKIALDDEGTAGGWLFWDDGQSIDTYGKGLYYLASFSASQNTMQSHIIFNNYITGTNPLKLGYIEIWGVGSVPVTSVSISVSGMVITPSFNNDPTTQVLSIDVTDRNISLHNFTSLTWISTL.

Over Met-1–Glu-13 the chain is Cytoplasmic. A helical; Signal-anchor for type II membrane protein membrane pass occupies residues Ile-14–Leu-34. The Lumenal portion of the chain corresponds to Ala-35–Leu-2753. Residues Ser-41–Ser-87 form a disordered region. Residues Pro-44–Pro-85 are compositionally biased toward low complexity. The P-type 1 domain occupies Ala-88–Lys-134. Cystine bridges form between Cys-90-Cys-118, Cys-101-Cys-117, and Cys-112-Cys-130. Asn-135 carries an N-linked (GlcNAc...) asparagine glycan. Asp-289 is a binding site for acarbose. An N-linked (GlcNAc...) asparagine glycan is attached at Asn-295. Residues Pro-356–Val-737 are maltase. Asp-413 serves as a coordination point for acarbose. 2 positions are modified to sulfotyrosine: Tyr-416 and Tyr-425. 3 N-linked (GlcNAc...) asparagine glycosylation sites follow: Asn-457, Asn-458, and Asn-479. Asp-529 (nucleophile) is an active-site residue. Residue Glu-532 is part of the active site. The acarbose site is built by Arg-612 and Asp-628. Residues Cys-659 and Cys-670 are joined by a disulfide bond. Position 686 (His-686) interacts with acarbose. N-linked (GlcNAc...) asparagine glycosylation is found at Asn-707, Asn-749, Asn-827, Asn-885, Asn-912, Asn-977, Asn-989, and Asn-1255. The P-type 2 domain maps to Trp-954–Asn-1000. Intrachain disulfides connect Cys-966–Cys-983 and Cys-978–Cys-996. Residues Thr-1221 to Thr-1632 form a glucoamylase region. At Tyr-1282 the chain carries Sulfotyrosine. Asn-1323, Asn-1364, and Asn-1388 each carry an N-linked (GlcNAc...) asparagine glycan. Residue Asp-1420 is the Nucleophile of the active site. Residue Glu-1423 is part of the active site. Asp-1526 (proton donor) is an active-site residue. One can recognise a P-type 3 domain in the interval Trp-1850 to Asn-1896. 2 cysteine pairs are disulfide-bonded: Cys-1862/Cys-1879 and Cys-1874/Cys-1892. N-linked (GlcNAc...) asparagine glycosylation is found at Asn-2499, Asn-2568, Asn-2738, and Asn-2743.

It belongs to the glycosyl hydrolase 31 family. In terms of assembly, monomer. In terms of processing, N- and O-glycosylated. Post-translationally, does not undergo intracellular or extracellular proteolytic cleavage. Sulfated. As to expression, broadly expressed. Highly expressed in small intestine. Expressed in granulocytes.

The protein resides in the apical cell membrane. The enzyme catalyses Hydrolysis of terminal, non-reducing (1-&gt;4)-linked alpha-D-glucose residues with release of alpha-D-glucose.. It catalyses the reaction D-maltoheptaose + H2O = D-maltohexaose + alpha-D-glucose. The catalysed reaction is D-maltohexaose + H2O = D-maltopentaose + alpha-D-glucose. It carries out the reaction D-maltopentaose + H2O = D-maltotetraose + alpha-D-glucose. The enzyme catalyses D-maltotetraose + H2O = D-maltotriose + alpha-D-glucose. It catalyses the reaction D-maltotriose + H2O = D-maltose + alpha-D-glucose. The catalysed reaction is D-maltose + H2O = alpha-D-glucose + D-glucose. It carries out the reaction nigerose + H2O = alpha-D-glucose + D-glucose. The enzyme catalyses kojibiose + H2O = alpha-D-glucose + D-glucose. It catalyses the reaction isomaltose + H2O = alpha-D-glucose + D-glucose. The catalysed reaction is 6-O-alpha-D-glucopyranosyl-D-fructose + H2O = alpha-D-glucose + D-fructose. The protein operates within carbohydrate degradation. With respect to regulation, down-regulated at high oligomaltose concentration as it occurs during the mealtime. Down-regulated by anti-diabetic drug acarbose. Alpha-(1,4) exo-glucosidase involved in breakdown of dietary starch oligosaccharides in small intestine. Cleaves the non-reducing alpha-(1,4)-linked glucose residue in linear dextrins with retention of anomeric center stereochemistry. Mainly hydrolyzes short length oligomaltoses having two to seven glucose residues. Can cleave alpha-(1,2), alpha-(1,3) and alpha-(1,6) glycosidic linkages with lower efficiency, whereas beta glycosidic linkages are usually not hydrolyzed. This is Maltase-glucoamylase from Homo sapiens (Human).